Here is a 203-residue protein sequence, read N- to C-terminus: Recombination protein RecR (203 aa).

Residues 56–71 (CTVCGNVSDDERCRIC) form a C4-type zinc finger. The Toprim domain occupies 79 to 179 (SVVCVVEEPK…TVTRIASGLP (101 aa)).

It belongs to the RecR family.

Functionally, may play a role in DNA repair. It seems to be involved in an RecBC-independent recombinational process of DNA repair. It may act with RecF and RecO. This is Recombination protein RecR from Mycobacterium leprae (strain TN).